The primary structure comprises 335 residues: Urokinase plasminogen activator surface receptor (335 aa).

A signal peptide spans 1 to 22; that stretch reads MGHPLLLPLLLLLHTCVPASWG. 3 UPAR/Ly6 domains span residues 23 to 114, 115 to 213, and 214 to 305; these read LRCM…RSRY, LECI…PQNG, and HQCY…YRKG. 3 cysteine pairs are disulfide-bonded: C25/C46, C28/C34, and C39/C67. N74 carries an N-linked (GlcNAc...) asparagine glycan. Disulfide bonds link C93/C98, C117/C144, C120/C127, C137/C169, C175/C192, C193/C198, C216/C244, C219/C227, C237/C263, C269/C287, and C288/C293. 5 N-linked (GlcNAc...) asparagine glycosylation sites follow: N184, N194, N222, N255, and N284. The GPI-anchor amidated glycine moiety is linked to residue G305. The propeptide at 306–335 is removed in mature form; it reads AAPQPGPAHLSLTITLLMTARLWGGTLLWT.

In terms of assembly, monomer. Interacts (via the UPAR/Ly6 domains) with SRPX2. Interacts with MRC2. Interacts with FAP (seprase); the interaction occurs at the cell surface of invadopodia membrane. Interacts with SORL1 (via N-terminal ectodomain); this interaction decreases PLAUR internalization. The ternary complex composed of PLAUR-PLAU-SERPINE1 also interacts with SORL1.

Its subcellular location is the cell membrane. It is found in the cell projection. The protein localises to the invadopodium membrane. Acts as a receptor for urokinase plasminogen activator. Plays a role in localizing and promoting plasmin formation. Mediates the proteolysis-independent signal transduction activation effects of U-PA. It is subject to negative-feedback regulation by U-PA which cleaves it into an inactive form. The chain is Urokinase plasminogen activator surface receptor (PLAUR) from Macaca fascicularis (Crab-eating macaque).